Here is a 189-residue protein sequence, read N- to C-terminus: Elongation factor P (189 aa).

Belongs to the elongation factor P family.

Its subcellular location is the cytoplasm. Its pathway is protein biosynthesis; polypeptide chain elongation. Involved in peptide bond synthesis. Stimulates efficient translation and peptide-bond synthesis on native or reconstituted 70S ribosomes in vitro. Probably functions indirectly by altering the affinity of the ribosome for aminoacyl-tRNA, thus increasing their reactivity as acceptors for peptidyl transferase. This Sinorhizobium medicae (strain WSM419) (Ensifer medicae) protein is Elongation factor P.